Here is a 151-residue protein sequence, read N- to C-terminus: Deoxyuridine 5'-triphosphate nucleotidohydrolase (151 aa).

Substrate-binding positions include 70-72 (RSG), asparagine 83, 87-89 (LID), and methionine 97.

The protein belongs to the dUTPase family. Requires Mg(2+) as cofactor.

It catalyses the reaction dUTP + H2O = dUMP + diphosphate + H(+). The protein operates within pyrimidine metabolism; dUMP biosynthesis; dUMP from dCTP (dUTP route): step 2/2. Functionally, this enzyme is involved in nucleotide metabolism: it produces dUMP, the immediate precursor of thymidine nucleotides and it decreases the intracellular concentration of dUTP so that uracil cannot be incorporated into DNA. This Pseudomonas putida (strain ATCC 700007 / DSM 6899 / JCM 31910 / BCRC 17059 / LMG 24140 / F1) protein is Deoxyuridine 5'-triphosphate nucleotidohydrolase.